We begin with the raw amino-acid sequence, 147 residues long: MVHFTAEEKSTILSVWGKVNVEEAGGEALGRLLVVYPWTQRFFDNFGNLSSPSAIMGNPKVKAHGKKVLTSFGEAVKNMDNLKGAFAKLSELHCDKLHVDPENFKLLGNAMVIILATHFGKEFTPDVQAAWQKLVSGVATALAHKYH.

Residues 3-147 (HFTAEEKSTI…VATALAHKYH (145 aa)) form the Globin domain. Residues serine 14 and serine 51 each carry the phosphoserine modification. Residues histidine 64 and histidine 93 each contribute to the heme b site.

The protein belongs to the globin family. Heterotetramer of two alpha chains and two epsilon chains in early embryonic hemoglobin Gower-2; two zeta chains and two epsilon chains in early embryonic hemoglobin Gower-1. As to expression, red blood cells.

Functionally, the epsilon chain is a beta-type chain of early mammalian embryonic hemoglobin. The polypeptide is Hemoglobin subunit epsilon (HBE1) (Propithecus verreauxi (White sifaka)).